A 223-amino-acid polypeptide reads, in one-letter code: 7-cyano-7-deazaguanine synthase (223 aa).

15–25 (FSGGQDSTTCL) contributes to the ATP binding site. Zn(2+)-binding residues include Cys191, Cys200, Cys203, and Cys206.

Belongs to the QueC family. In terms of assembly, homodimer. Zn(2+) is required as a cofactor.

The enzyme catalyses 7-carboxy-7-deazaguanine + NH4(+) + ATP = 7-cyano-7-deazaguanine + ADP + phosphate + H2O + H(+). Its pathway is purine metabolism; 7-cyano-7-deazaguanine biosynthesis. Its function is as follows. Catalyzes the ATP-dependent conversion of 7-carboxy-7-deazaguanine (CDG) to 7-cyano-7-deazaguanine (preQ(0)). The chain is 7-cyano-7-deazaguanine synthase from Staphylococcus epidermidis (strain ATCC 35984 / DSM 28319 / BCRC 17069 / CCUG 31568 / BM 3577 / RP62A).